The following is a 259-amino-acid chain: Electron transfer flavoprotein subunit beta (259 aa).

Belongs to the ETF beta-subunit/FixA family. Heterodimer of an alpha and a beta subunit. FAD is required as a cofactor. AMP serves as cofactor.

In terms of biological role, the electron transfer flavoprotein serves as a specific electron acceptor for other dehydrogenases. It transfers the electrons to the main respiratory chain via ETF-ubiquinone oxidoreductase (ETF dehydrogenase). The protein is Electron transfer flavoprotein subunit beta (etfB) of Clostridium acetobutylicum (strain ATCC 824 / DSM 792 / JCM 1419 / IAM 19013 / LMG 5710 / NBRC 13948 / NRRL B-527 / VKM B-1787 / 2291 / W).